The sequence spans 566 residues: Endoglucanase G (566 aa).

The N-terminal stretch at 1-30 (MKKAKAIFSLVVALMVLAIFCFAQNTGSTA) is a signal peptide. The Proton donor role is filled by Glu226. Catalysis depends on Glu381, which acts as the Nucleophile. The tract at residues 473-494 (GTPQASDPPATPTATPTKPAAS) is disordered. A compositionally biased stretch (low complexity) spans 474–494 (TPQASDPPATPTATPTKPAAS). Positions 497-564 (PSFIYGDINS…LLRSIDKLPH (68 aa)) constitute a Dockerin domain.

The protein belongs to the glycosyl hydrolase 5 (cellulase A) family.

It catalyses the reaction Endohydrolysis of (1-&gt;4)-beta-D-glucosidic linkages in cellulose, lichenin and cereal beta-D-glucans.. Its function is as follows. This enzyme catalyzes the endohydrolysis of 1,4-beta-glucosidic linkages in cellulose, lichenin and cereal beta-D-glucans. The chain is Endoglucanase G (celG) from Acetivibrio thermocellus (strain ATCC 27405 / DSM 1237 / JCM 9322 / NBRC 103400 / NCIMB 10682 / NRRL B-4536 / VPI 7372) (Clostridium thermocellum).